A 90-amino-acid chain; its full sequence is Translation initiation factor IF-1 2 (90 aa).

Residues 1-72 (MAKEELLELD…TKGRINFRHK (72 aa)) form the S1-like domain.

This sequence belongs to the IF-1 family. Component of the 30S ribosomal translation pre-initiation complex which assembles on the 30S ribosome in the order IF-2 and IF-3, IF-1 and N-formylmethionyl-tRNA(fMet); mRNA recruitment can occur at any time during PIC assembly.

It localises to the cytoplasm. In terms of biological role, one of the essential components for the initiation of protein synthesis. Stabilizes the binding of IF-2 and IF-3 on the 30S subunit to which N-formylmethionyl-tRNA(fMet) subsequently binds. Helps modulate mRNA selection, yielding the 30S pre-initiation complex (PIC). Upon addition of the 50S ribosomal subunit IF-1, IF-2 and IF-3 are released leaving the mature 70S translation initiation complex. The protein is Translation initiation factor IF-1 2 of Paraburkholderia xenovorans (strain LB400).